Consider the following 194-residue polypeptide: Large ribosomal subunit protein eL15 (194 aa).

Residues serine 164 to lysine 194 form a disordered region. Over residues proline 184 to lysine 194 the composition is skewed to basic residues.

Belongs to the eukaryotic ribosomal protein eL15 family.

The sequence is that of Large ribosomal subunit protein eL15 (rpl15e) from Methanocaldococcus jannaschii (strain ATCC 43067 / DSM 2661 / JAL-1 / JCM 10045 / NBRC 100440) (Methanococcus jannaschii).